The chain runs to 144 residues: MSAAGDLRRRARLSRLVSFSASHRLHSPSLSDEENLRVFGKCNNPNGHGHNYKVVVTVHGEIDPVTGMVMNLTDLKEYMEEAIMKPLDHKNLDLDVPYFADAVSTTENVAVYIWESLQKLLPVGALYKVKVFETDNNIVVYKGE.

Ser-18 bears the Phosphoserine mark. A Zn(2+)-binding site is contributed by His-23. Residue Ser-27 is modified to Phosphoserine. Cys-42 (proton acceptor) is an active-site residue. The Zn(2+) site is built by His-48 and His-50. The active-site Charge relay system is the His-89. Tyr-127 bears the Phosphotyrosine mark. Catalysis depends on Glu-133, which acts as the Charge relay system.

Belongs to the PTPS family. In terms of assembly, homodimer. Homohexamer formed of two homotrimers in a head to head fashion. The cofactor is Zn(2+). In terms of processing, phosphorylation of Ser-18 is required for maximal enzyme activity.

The enzyme catalyses 7,8-dihydroneopterin 3'-triphosphate = 6-pyruvoyl-5,6,7,8-tetrahydropterin + triphosphate + H(+). It functions in the pathway cofactor biosynthesis; tetrahydrobiopterin biosynthesis; tetrahydrobiopterin from 7,8-dihydroneopterin triphosphate: step 1/3. Its function is as follows. Involved in the biosynthesis of tetrahydrobiopterin, an essential cofactor of aromatic amino acid hydroxylases. Catalyzes the transformation of 7,8-dihydroneopterin triphosphate into 6-pyruvoyl tetrahydropterin. In Mus musculus (Mouse), this protein is 6-pyruvoyl tetrahydrobiopterin synthase.